We begin with the raw amino-acid sequence, 154 residues long: Acidic phospholipase A2 1 (154 aa).

The N-terminal stretch at 1–19 (MHPAHLLVLLGVCVSLLGA) is a signal peptide. The propeptide occupies 20–27 (ARIPPLPL). Intrachain disulfides connect C38/C104, C54/C153, C56/C72, C71/C132, C78/C125, C88/C118, and C111/C123. Positions 55, 57, and 59 each coordinate Ca(2+). H75 is a catalytic residue. Ca(2+) is bound at residue D76. D126 is a catalytic residue.

Belongs to the phospholipase A2 family. Group I subfamily. D49 sub-subfamily. Monomer. Ca(2+) serves as cofactor. As to expression, expressed by the venom gland.

It localises to the secreted. It catalyses the reaction a 1,2-diacyl-sn-glycero-3-phosphocholine + H2O = a 1-acyl-sn-glycero-3-phosphocholine + a fatty acid + H(+). Snake venom phospholipase A2 (PLA2) that shows moderate enzymatic activity and exhibits procoagulant activity. PLA2 catalyzes the calcium-dependent hydrolysis of the 2-acyl groups in 3-sn-phosphoglycerides. The sequence is that of Acidic phospholipase A2 1 from Pseudonaja textilis (Eastern brown snake).